A 364-amino-acid polypeptide reads, in one-letter code: Probable secreted lipase phiG (364 aa).

The signal sequence occupies residues 1–18 (MMPFMDLILSILVSSVLL). N-linked (GlcNAc...) asparagine glycosylation occurs at Asn-49. Ser-203 acts as the Nucleophile in catalysis. The N-linked (GlcNAc...) asparagine glycan is linked to Asn-262.

Belongs to the AB hydrolase superfamily.

The protein localises to the secreted. It catalyses the reaction a carboxylic ester + H2O = an alcohol + a carboxylate + H(+). In terms of biological role, part of the gene cluster that mediates the biosynthesis of the antihypercholesterolemic agents phomoidrides which are dimeric anhydrides. The function of phiG within the pathway has still to be determined. The pathway begins with the highly reducing polyketide synthase phiA that catalyzes the formation of a C12-fatty acyl-ACP, starting from one acetate and 5 malonate units. The hydrolase phiM is involved in the release of the C12-fatty acyl chain from phiA. The alkylcitrate synthase (ACS) phiJ and the alkylcitrate dehydratase (ACDH) phiI then give rise to decarboxylated monomeric anhydrides by coupling the C12-fatty acyl chain with oxalacetic acid. The cyclase phiC is responsible for the dimerization of the monomeric anhydrides which leads to the production of prephomoidride that contains the characteristic bicyclo[4.3.1]deca-1,6-diene system of phomoidrides. Iterative oxidation catalyzed by the alpha-ketoglutarate-dependent dioxygenase phiK produced then phomoidride A. Finally, the methyltransferase phiE converts phomoidride A to phomoidride B via an acetalization reaction. The phosphatidylethanolamine-binding protein phiB and phiN are not essential for dimerization and their functions have still to be determined. The chain is Probable secreted lipase phiG from Fungal sp. (strain ATCC 74256).